Reading from the N-terminus, the 623-residue chain is Endoglucanase 7 (623 aa).

The Cytoplasmic portion of the chain corresponds to 1–79; sequence MHPGNVWGGS…LGCVSVSRTV (79 aa). Residues 80 to 100 traverse the membrane as a helical; Signal-anchor for type II membrane protein segment; it reads FLWTVGSIAVLFLVVALPIII. Residues 101–623 are Extracellular-facing; sequence VKSLPRHKSA…TPPPPKAWKP (523 aa). Residues Asn-116, Asn-221, Asn-328, Asn-349, Asn-412, Asn-429, and Asn-464 are each glycosylated (N-linked (GlcNAc...) asparagine). His-517 is a catalytic residue. A glycan (N-linked (GlcNAc...) asparagine) is linked at Asn-548. Asp-565 is a catalytic residue. N-linked (GlcNAc...) asparagine glycosylation occurs at Asn-571. The active site involves Glu-574.

The protein belongs to the glycosyl hydrolase 9 (cellulase E) family. In terms of tissue distribution, expressed in basal region of leaf blade and proximal parts of leaf and floral organ.

It localises to the membrane. It carries out the reaction Endohydrolysis of (1-&gt;4)-beta-D-glucosidic linkages in cellulose, lichenin and cereal beta-D-glucans.. The chain is Endoglucanase 7 (KOR2) from Arabidopsis thaliana (Mouse-ear cress).